Consider the following 593-residue polypeptide: Translation initiation factor rli1 (593 aa).

2 consecutive 4Fe-4S ferredoxin-type domains span residues Arg7–Ile39 and Arg46–Leu75. 2 ABC transporter domains span residues Ile70–Gly318 and Phe334–Leu556. ATP is bound by residues Gly110–Ser117 and Gly382–Thr389.

The protein belongs to the ABC transporter superfamily. In terms of assembly, component of the multifactor complex (MFC). The complex associates with pre-initiation complexes.

The protein resides in the cytoplasm. Its subcellular location is the nucleus. In terms of biological role, component of the multifactor complex (MFC) involved in translation initiation. Required for the binding of MFC to the 40S ribosome. Required for the processing and nuclear export of the 60S and 40S ribosomal subunits. This is Translation initiation factor rli1 (rli1) from Schizosaccharomyces pombe (strain 972 / ATCC 24843) (Fission yeast).